The primary structure comprises 377 residues: Alanine racemase (377 aa).

K37 functions as the Proton acceptor; specific for D-alanine in the catalytic mechanism. The residue at position 37 (K37) is an N6-(pyridoxal phosphate)lysine. Position 135 (R135) interacts with substrate. The active-site Proton acceptor; specific for L-alanine is the Y271. Residue M319 participates in substrate binding.

Belongs to the alanine racemase family. It depends on pyridoxal 5'-phosphate as a cofactor.

It carries out the reaction L-alanine = D-alanine. The protein operates within amino-acid biosynthesis; D-alanine biosynthesis; D-alanine from L-alanine: step 1/1. Catalyzes the interconversion of L-alanine and D-alanine. May also act on other amino acids. The protein is Alanine racemase (alr) of Helicobacter pylori (strain G27).